The following is a 138-amino-acid chain: Holo-[acyl-carrier-protein] synthase (138 aa).

The Mg(2+) site is built by D8 and E56.

Belongs to the P-Pant transferase superfamily. AcpS family. Requires Mg(2+) as cofactor.

It is found in the cytoplasm. It carries out the reaction apo-[ACP] + CoA = holo-[ACP] + adenosine 3',5'-bisphosphate + H(+). Transfers the 4'-phosphopantetheine moiety from coenzyme A to a Ser of acyl-carrier-protein. This chain is Holo-[acyl-carrier-protein] synthase, found in Clostridium novyi (strain NT).